A 495-amino-acid chain; its full sequence is Dipeptide and tripeptide permease B (495 aa).

The Cytoplasmic portion of the chain corresponds to 1–16 (MDNKVSILNQPKPFKM). A helical membrane pass occupies residues 17–37 (IFFIELWERFGYYGLQGILAV). Over 38–50 (YFVDKLGFSMQDS) the chain is Periplasmic. Residues 51–71 (FVTFGAFAALVYGLVSVGGYV) form a helical membrane-spanning segment. Over 72 to 80 (GDYVLGTKR) the chain is Cytoplasmic. A helical transmembrane segment spans residues 81–101 (TMVFGAVVLALGYFLMGFSIL). Over 102–104 (NPN) the chain is Periplasmic. Residues 105-125 (FIYVALGAIAVGNGLFKANPS) form a helical membrane-spanning segment. The Cytoplasmic portion of the chain corresponds to 126–144 (SLLAKCYEKGDSRLDGAFT). The helical transmembrane segment at 145 to 165 (LYYMSINIGSLVSLSISPVIA) threads the bilayer. Residues 166 to 170 (NNYGY) are Periplasmic-facing. The chain crosses the membrane as a helical span at residues 171–191 (EYAFIICGLGLIASLFSYFSL). At 192 to 209 (RSTVQGIGSEPDALPLNK) the chain is on the cytoplasmic side. The helical transmembrane segment at 210–230 (TKALIVLIGTIASTLVCAWLL) threads the bilayer. Gln-231 is a topological domain (periplasmic). Residues 232–252 (NIMMANLALGLIGVGVVGFFL) traverse the membrane as a helical segment. Topologically, residues 253–265 (KETFKEVGEQRNK) are cytoplasmic. The helical transmembrane segment at 266 to 286 (MIVAFILMLQAIIFYVLYAQM) threads the bilayer. Residues 287–309 (PTSLNFFAINNVHSELFGMDINP) are Periplasmic-facing. The chain crosses the membrane as a helical span at residues 310–330 (VSLQALNPFWVIFCSPILAYL). Over 331–348 (YTYYGNQNKDLSMPGKFT) the chain is Cytoplasmic. Residues 349–369 (VGMFMCAFGFLSVAAAGNWFA) traverse the membrane as a helical segment. Topologically, residues 370-373 (DQAG) are periplasmic. The chain crosses the membrane as a helical span at residues 374 to 394 (MVSVWWMVLVYLFQSLGELMI). At 395-409 (SGLGLAMVASLVPQR) the chain is on the cytoplasmic side. A helical transmembrane segment spans residues 410-430 (LMGFTMGAWFLTQAASFIIGG). Over 431 to 454 (YVATFSATPEHLTDPLDTLPVYTE) the chain is Periplasmic. Residues 455-475 (LFQNIGFVTLAVAIVMAITAP) traverse the membrane as a helical segment. Over 476–495 (KLNKMMTSSQPEDAELVEQP) the chain is Cytoplasmic.

This sequence belongs to the major facilitator superfamily. Proton-dependent oligopeptide transporter (POT/PTR) (TC 2.A.17) family. DtpB subfamily.

The protein localises to the cell inner membrane. Its function is as follows. Proton-dependent permease that transports di- and tripeptides. This Aliivibrio fischeri (strain MJ11) (Vibrio fischeri) protein is Dipeptide and tripeptide permease B.